Consider the following 356-residue polypeptide: Arginine kinase (356 aa).

One can recognise a Phosphagen kinase N-terminal domain in the interval 9-91 (KLEAGFQKLQ…FDPIIEDYHI (83 aa)). 64 to 68 (GVGIY) is an L-arginine binding site. A Phosphagen kinase C-terminal domain is found at 119 to 356 (FVISTRVRCG…AELIKLEQSA (238 aa)). Residues 122–126 (STRVR) and histidine 185 contribute to the ATP site. Glutamate 225 contacts L-arginine. Arginine 229 contributes to the ATP binding site. Residue cysteine 271 participates in L-arginine binding. Residues 280–284 (RASVH) and 309–314 (RGTRGE) contribute to the ATP site. Glutamate 314 serves as a coordination point for L-arginine.

The protein belongs to the ATP:guanido phosphotransferase family.

The enzyme catalyses L-arginine + ATP = N(omega)-phospho-L-arginine + ADP + H(+). This chain is Arginine kinase (ARGK), found in Artemia franciscana (Brine shrimp).